A 130-amino-acid chain; its full sequence is UPF0102 protein Cthe_0758 (130 aa).

This sequence belongs to the UPF0102 family.

The chain is UPF0102 protein Cthe_0758 from Acetivibrio thermocellus (strain ATCC 27405 / DSM 1237 / JCM 9322 / NBRC 103400 / NCIMB 10682 / NRRL B-4536 / VPI 7372) (Clostridium thermocellum).